The sequence spans 95 residues: UPF0235 protein Ssed_1229 (95 aa).

It belongs to the UPF0235 family.

The protein is UPF0235 protein Ssed_1229 of Shewanella sediminis (strain HAW-EB3).